The chain runs to 1056 residues: Carbamoyl phosphate synthase large chain (1056 aa).

The segment at 1 to 399 (MKIDVSKVIV…AFQKAIRMLD (399 aa)) is carboxyphosphate synthetic domain. Positions 127, 167, 173, 174, 206, 208, 213, 239, 240, 241, 282, and 296 each coordinate ATP. The ATP-grasp 1 domain occupies 131–325 (QKTMKKVGLP…LAYIATKLAI (195 aa)). Mg(2+) contacts are provided by Gln282, Glu296, and Asn298. Mn(2+)-binding residues include Gln282, Glu296, and Asn298. Residues 400–536 (IGDELIGKYY…VTYDGVENDI (137 aa)) are oligomerization domain. Residues 537 to 919 (PKPKKPSILV…LKSWLSVKPN (383 aa)) form a carbamoyl phosphate synthetic domain region. The region spanning 661-849 (SKLLEKLGIP…LMELSAQAVL (189 aa)) is the ATP-grasp 2 domain. 10 residues coordinate ATP: Arg697, Lys736, Ile738, Glu742, Gly766, Val767, His768, Ser769, Gln809, and Glu820. 3 residues coordinate Mg(2+): Gln809, Glu820, and Asn822. Gln809, Glu820, and Asn822 together coordinate Mn(2+). The MGS-like domain maps to 915–1043 (SVKPNELPKT…REYWIRKIEE (129 aa)). Residues 920 to 1056 (ELPKTSALIY…EYAASVVLRR (137 aa)) form an allosteric domain region.

This sequence belongs to the CarB family. As to quaternary structure, composed of two chains; the small (or glutamine) chain promotes the hydrolysis of glutamine to ammonia, which is used by the large (or ammonia) chain to synthesize carbamoyl phosphate. Tetramer of heterodimers (alpha,beta)4. The cofactor is Mg(2+). Requires Mn(2+) as cofactor.

The catalysed reaction is hydrogencarbonate + L-glutamine + 2 ATP + H2O = carbamoyl phosphate + L-glutamate + 2 ADP + phosphate + 2 H(+). It catalyses the reaction hydrogencarbonate + NH4(+) + 2 ATP = carbamoyl phosphate + 2 ADP + phosphate + 2 H(+). Its pathway is amino-acid biosynthesis; L-arginine biosynthesis; carbamoyl phosphate from bicarbonate: step 1/1. It participates in pyrimidine metabolism; UMP biosynthesis via de novo pathway; (S)-dihydroorotate from bicarbonate: step 1/3. Its function is as follows. Large subunit of the glutamine-dependent carbamoyl phosphate synthetase (CPSase). CPSase catalyzes the formation of carbamoyl phosphate from the ammonia moiety of glutamine, carbonate, and phosphate donated by ATP, constituting the first step of 2 biosynthetic pathways, one leading to arginine and/or urea and the other to pyrimidine nucleotides. The large subunit (synthetase) binds the substrates ammonia (free or transferred from glutamine from the small subunit), hydrogencarbonate and ATP and carries out an ATP-coupled ligase reaction, activating hydrogencarbonate by forming carboxy phosphate which reacts with ammonia to form carbamoyl phosphate. This chain is Carbamoyl phosphate synthase large chain, found in Pyrococcus furiosus (strain ATCC 43587 / DSM 3638 / JCM 8422 / Vc1).